Here is a 339-residue protein sequence, read N- to C-terminus: Isopentenyl-diphosphate delta-isomerase (339 aa).

Residue 7–8 coordinates substrate; sequence RK. FMN-binding positions include serine 65, 66 to 68, serine 96, and asparagine 125; that span reads SMT. Position 96-98 (96-98) interacts with substrate; it reads SQR. Glutamine 160 provides a ligand contact to substrate. Glutamate 161 lines the Mg(2+) pocket. FMN is bound by residues lysine 192, threonine 222, and 293–294; that span reads AG.

The protein belongs to the IPP isomerase type 2 family. As to quaternary structure, homooctamer. Dimer of tetramers. The cofactor is FMN. It depends on NADPH as a cofactor. Requires Mg(2+) as cofactor.

Its subcellular location is the cytoplasm. The enzyme catalyses isopentenyl diphosphate = dimethylallyl diphosphate. In terms of biological role, involved in the biosynthesis of isoprenoids. Catalyzes the 1,3-allylic rearrangement of the homoallylic substrate isopentenyl (IPP) to its allylic isomer, dimethylallyl diphosphate (DMAPP). The chain is Isopentenyl-diphosphate delta-isomerase from Vibrio parahaemolyticus serotype O3:K6 (strain RIMD 2210633).